The chain runs to 396 residues: Ornithine aminotransferase (396 aa).

The residue at position 255 (K255) is an N6-(pyridoxal phosphate)lysine.

This sequence belongs to the class-III pyridoxal-phosphate-dependent aminotransferase family. OAT subfamily. It depends on pyridoxal 5'-phosphate as a cofactor.

Its subcellular location is the cytoplasm. It catalyses the reaction a 2-oxocarboxylate + L-ornithine = L-glutamate 5-semialdehyde + an L-alpha-amino acid. It participates in amino-acid biosynthesis; L-proline biosynthesis; L-glutamate 5-semialdehyde from L-ornithine: step 1/1. Functionally, catalyzes the interconversion of ornithine to glutamate semialdehyde. This is Ornithine aminotransferase from Staphylococcus epidermidis (strain ATCC 35984 / DSM 28319 / BCRC 17069 / CCUG 31568 / BM 3577 / RP62A).